Reading from the N-terminus, the 405-residue chain is Probable dual specificity protein kinase YAK1 homolog (405 aa).

Residues 40-335 (YMIIDMLGTG…AKSLASHSYL (296 aa)) form the Protein kinase domain. ATP-binding positions include 46–54 (LGTGTFGQV) and Lys-68. Residue Asp-163 is the Proton acceptor of the active site.

It belongs to the protein kinase superfamily. CMGC Ser/Thr protein kinase family. MNB/DYRK subfamily.

The protein localises to the cytoplasm. The protein resides in the nucleus. It carries out the reaction L-seryl-[protein] + ATP = O-phospho-L-seryl-[protein] + ADP + H(+). The enzyme catalyses L-threonyl-[protein] + ATP = O-phospho-L-threonyl-[protein] + ADP + H(+). The catalysed reaction is L-tyrosyl-[protein] + ATP = O-phospho-L-tyrosyl-[protein] + ADP + H(+). Functionally, negative regulator of the cell cycle acting downstream of the cAMP-dependent protein kinase. Part of a glucose-sensing system involved in growth control in response to glucose availability. The chain is Probable dual specificity protein kinase YAK1 homolog (YAK1) from Encephalitozoon cuniculi (strain GB-M1) (Microsporidian parasite).